The following is a 259-amino-acid chain: AA9 family lytic polysaccharide monooxygenase E (259 aa).

The signal sequence occupies residues 1–20; the sequence is MKATVLAGLAAVIAAQGVAG. Cu(2+) is bound by residues H21 and H99. An intrachain disulfide couples C69 to C193. Positions 179 and 188 each coordinate O2. Y190 provides a ligand contact to Cu(2+).

It belongs to the polysaccharide monooxygenase AA9 family. Requires Cu(2+) as cofactor.

Its subcellular location is the secreted. It catalyses the reaction [(1-&gt;4)-beta-D-glucosyl]n+m + reduced acceptor + O2 = 4-dehydro-beta-D-glucosyl-[(1-&gt;4)-beta-D-glucosyl]n-1 + [(1-&gt;4)-beta-D-glucosyl]m + acceptor + H2O.. Its function is as follows. Lytic polysaccharide monooxygenase (LPMO) that depolymerizes crystalline and amorphous polysaccharides via the oxidation of scissile alpha- or beta-(1-4)-glycosidic bonds, yielding C1 or C4 oxidation products. Catalysis by LPMOs requires the reduction of the active-site copper from Cu(II) to Cu(I) by a reducing agent and H(2)O(2) or O(2) as a cosubstrate. In Malbranchea cinnamomea (Thermophilic fungus), this protein is AA9 family lytic polysaccharide monooxygenase E.